The chain runs to 785 residues: Disintegrin and metalloproteinase domain-containing protein B (785 aa).

Positions 1 to 26 (MRFLKSALPFVASALSLLSVQAAARS) are cleaved as a signal peptide. At 27–703 (QEPSAIQHVS…GSWVEQHKNL (677 aa)) the chain is on the extracellular side. The Peptidase M12B domain occupies 279–507 (KQVALVGIAA…NSVKSSCLSD (229 aa)). 3 N-linked (GlcNAc...) asparagine glycosylation sites follow: asparagine 322, asparagine 329, and asparagine 355. Disulfide bonds link cysteine 398-cysteine 492 and cysteine 446-cysteine 464. Histidine 429 is a binding site for Zn(2+). Residue glutamate 430 is part of the active site. 2 residues coordinate Zn(2+): histidine 433 and histidine 439. The Disintegrin domain maps to 516 to 605 (GSQCGNGIVE…TCPADSFKKD (90 aa)). Residues asparagine 561, asparagine 593, and asparagine 640 are each glycosylated (N-linked (GlcNAc...) asparagine). A disulfide bridge connects residues cysteine 577 and cysteine 597. A helical membrane pass occupies residues 704-724 (VIGVACGVGGLLVLSILWCMI). Over 725–785 (NRCRRARTVV…GPYQSATRYA (61 aa)) the chain is Cytoplasmic. The tract at residues 737 to 785 (PPMRPWPGPMPPPPPQMGQWAGPNRGYQGLRAEPPPPYPGPYQSATRYA) is disordered. Over residues 739–752 (MRPWPGPMPPPPPQ) the composition is skewed to pro residues.

The cofactor is Zn(2+).

Its subcellular location is the membrane. Functionally, probable zinc protease. The polypeptide is Disintegrin and metalloproteinase domain-containing protein B (ADM-B) (Aspergillus fumigatus (strain ATCC MYA-4609 / CBS 101355 / FGSC A1100 / Af293) (Neosartorya fumigata)).